Here is a 546-residue protein sequence, read N- to C-terminus: T-complex protein 1 subunit zeta (546 aa).

Residue Ser2 is modified to N-acetylserine. A Phosphoserine modification is found at Ser249.

It belongs to the TCP-1 chaperonin family. In terms of assembly, heterooligomeric complex of about 850 to 900 kDa that forms two stacked rings, 12 to 16 nm in diameter.

It is found in the cytoplasm. Its function is as follows. Molecular chaperone; assists the folding of proteins upon ATP hydrolysis. Known to play a role, in vitro, in the folding of actin and tubulin. In yeast may play a role in mitotic spindle formation. This chain is T-complex protein 1 subunit zeta (CCT6), found in Saccharomyces cerevisiae (strain ATCC 204508 / S288c) (Baker's yeast).